Reading from the N-terminus, the 448-residue chain is Exodeoxyribonuclease 7 large subunit (448 aa).

It belongs to the XseA family. Heterooligomer composed of large and small subunits.

Its subcellular location is the cytoplasm. It catalyses the reaction Exonucleolytic cleavage in either 5'- to 3'- or 3'- to 5'-direction to yield nucleoside 5'-phosphates.. Its function is as follows. Bidirectionally degrades single-stranded DNA into large acid-insoluble oligonucleotides, which are then degraded further into small acid-soluble oligonucleotides. In Shewanella sp. (strain MR-4), this protein is Exodeoxyribonuclease 7 large subunit.